The chain runs to 507 residues: Maturase K (507 aa).

It belongs to the intron maturase 2 family. MatK subfamily.

The protein localises to the plastid. Its subcellular location is the chloroplast. In terms of biological role, usually encoded in the trnK tRNA gene intron. Probably assists in splicing its own and other chloroplast group II introns. This Liriodendron tulipifera (Tuliptree) protein is Maturase K.